The sequence spans 395 residues: S-adenosylmethionine synthase (395 aa).

ATP is bound at residue H14. D16 contacts Mg(2+). E42 provides a ligand contact to K(+). The L-methionine site is built by E55 and Q98. The segment at 98–108 (QSPDIALGVDK) is flexible loop. ATP-binding positions include 174–176 (DGK), 240–241 (RF), D249, 255–256 (RK), A272, and K276. D249 lines the L-methionine pocket. L-methionine is bound at residue K280.

The protein belongs to the AdoMet synthase family. Homotetramer; dimer of dimers. It depends on Mg(2+) as a cofactor. K(+) is required as a cofactor.

The protein resides in the cytoplasm. It catalyses the reaction L-methionine + ATP + H2O = S-adenosyl-L-methionine + phosphate + diphosphate. The protein operates within amino-acid biosynthesis; S-adenosyl-L-methionine biosynthesis; S-adenosyl-L-methionine from L-methionine: step 1/1. Catalyzes the formation of S-adenosylmethionine (AdoMet) from methionine and ATP. The overall synthetic reaction is composed of two sequential steps, AdoMet formation and the subsequent tripolyphosphate hydrolysis which occurs prior to release of AdoMet from the enzyme. This is S-adenosylmethionine synthase from Thermotoga maritima (strain ATCC 43589 / DSM 3109 / JCM 10099 / NBRC 100826 / MSB8).